The chain runs to 695 residues: Centrosomal protein kizuna (695 aa).

Positions 1–12 (MPRGRGGGGGGL) are enriched in gly residues. The tract at residues 1–24 (MPRGRGGGGGGLRQASATSAPLAS) is disordered. Positions 15-24 (ASATSAPLAS) are enriched in low complexity. 2 coiled-coil regions span residues 29–57 (ERVG…EYNK) and 102–132 (VEHL…LSKD). Disordered regions lie at residues 261–313 (EIGS…SDRE), 351–391 (HSAW…SDLT), 444–465 (QSFP…EKVP), and 633–695 (SEAS…FYDT). 2 stretches are compositionally biased toward polar residues: residues 263–274 (GSSTQHSKSNLS) and 282–297 (LHSS…NSIT). Basic and acidic residues-rich tracts occupy residues 299–313 (LKCD…SDRE) and 360–377 (DLDH…KHEE). Over residues 382 to 391 (GSSCSSSDLT) the composition is skewed to low complexity. The residue at position 391 (Thr-391) is a Phosphothreonine; by PLK1. Positions 448–465 (DSKREPSPDSPRQPEKVP) are enriched in basic and acidic residues. Over residues 633 to 645 (SEASFSSSEGSPL) the composition is skewed to low complexity. Ser-667, Ser-670, and Ser-672 each carry phosphoserine. The span at 676–686 (AALRPRDHDMP) shows a compositional bias: basic and acidic residues.

Belongs to the kizuna family. In terms of assembly, interacts with AKAP9, CEP72, ODF2, PCNT and TUBGCP2. Post-translationally, phosphorylation at Thr-391 by PLK1 is not needed for centrosomal localization or pericentriolar material expansion but is indispensable for spindle-pole stabilization.

The protein resides in the cytoplasm. It is found in the cytoskeleton. The protein localises to the microtubule organizing center. It localises to the centrosome. Its subcellular location is the cilium basal body. In terms of biological role, centrosomal protein required for establishing a robust mitotic centrosome architecture that can endure the forces that converge on the centrosomes during spindle formation. Required for stabilizing the expanded pericentriolar material around the centriole. The polypeptide is Centrosomal protein kizuna (Kiz) (Mus musculus (Mouse)).